Consider the following 429-residue polypeptide: UDP-N-acetylglucosamine 1-carboxyvinyltransferase (429 aa).

K22–N23 provides a ligand contact to phosphoenolpyruvate. Residue R96 coordinates UDP-N-acetyl-alpha-D-glucosamine. The active-site Proton donor is the C120. C120 carries the post-translational modification 2-(S-cysteinyl)pyruvic acid O-phosphothioketal. UDP-N-acetyl-alpha-D-glucosamine contacts are provided by residues R125–L129, D310, and I332.

This sequence belongs to the EPSP synthase family. MurA subfamily.

It localises to the cytoplasm. It carries out the reaction phosphoenolpyruvate + UDP-N-acetyl-alpha-D-glucosamine = UDP-N-acetyl-3-O-(1-carboxyvinyl)-alpha-D-glucosamine + phosphate. It functions in the pathway cell wall biogenesis; peptidoglycan biosynthesis. In terms of biological role, cell wall formation. Adds enolpyruvyl to UDP-N-acetylglucosamine. The sequence is that of UDP-N-acetylglucosamine 1-carboxyvinyltransferase from Caulobacter vibrioides (strain ATCC 19089 / CIP 103742 / CB 15) (Caulobacter crescentus).